Here is a 291-residue protein sequence, read N- to C-terminus: MTTLAIDIGGTKLAAALIGADGQIRDRRELPTPASQTPQALRDALSALVSPLQAHAQRVAIASTGIIRDGSLLALNPHNLGGLLHFPLVKTLEQLTNLPTIAINDAQAAAWAEYQALDGDITDIVFITVSTGVGGGVVSGGKLRTGPGGLAGHIGHTLADPHGPVCGCGRTGCVEAIASGRGIAAAAQGELAGANAKTIFTRAGQGDEQAQQLIHRSARTLARLIADIKATTDCQCVVVGGSVGLAEGYLALVETYLAQEPEAFHVDLLAAHYRHDAGLLGAALLAQGEKL.

ATP-binding positions include 5–12 (AIDIGGTK) and 132–139 (GVGGGVVS). Positions 156, 166, 168, and 173 each coordinate Zn(2+).

The protein belongs to the ROK (NagC/XylR) family. NanK subfamily. As to quaternary structure, homodimer.

The enzyme catalyses an N-acyl-D-mannosamine + ATP = an N-acyl-D-mannosamine 6-phosphate + ADP + H(+). The protein operates within amino-sugar metabolism; N-acetylneuraminate degradation; D-fructose 6-phosphate from N-acetylneuraminate: step 2/5. In terms of biological role, catalyzes the phosphorylation of N-acetylmannosamine (ManNAc) to ManNAc-6-P. The sequence is that of N-acetylmannosamine kinase from Escherichia coli O127:H6 (strain E2348/69 / EPEC).